The sequence spans 877 residues: Leucine--tRNA ligase (877 aa).

The 'HIGH' region signature appears at 43-53 (PYPSGRIHMGH). The 'KMSKS' region signature appears at 628 to 632 (KMSKS). Position 631 (Lys631) interacts with ATP.

Belongs to the class-I aminoacyl-tRNA synthetase family.

The protein resides in the cytoplasm. The enzyme catalyses tRNA(Leu) + L-leucine + ATP = L-leucyl-tRNA(Leu) + AMP + diphosphate. This is Leucine--tRNA ligase from Brucella abortus biovar 1 (strain 9-941).